The sequence spans 136 residues: uncharacterized protein (136 aa).

This is an uncharacterized protein from Gallus gallus (Chicken).